Reading from the N-terminus, the 278-residue chain is Orotidine 5'-phosphate decarboxylase (278 aa).

Substrate contacts are provided by residues aspartate 40, 65–67 (KTH), 96–105 (DRKFIDIGNT), tyrosine 230, and arginine 248. Lysine 98 functions as the Proton donor in the catalytic mechanism.

Belongs to the OMP decarboxylase family.

It catalyses the reaction orotidine 5'-phosphate + H(+) = UMP + CO2. It participates in pyrimidine metabolism; UMP biosynthesis via de novo pathway; UMP from orotate: step 2/2. This Penicillium chrysogenum (Penicillium notatum) protein is Orotidine 5'-phosphate decarboxylase (pyrG).